Here is a 692-residue protein sequence, read N- to C-terminus: Transforming growth factor beta activator LRRC33 (692 aa).

The N-terminal stretch at 1–18 is a signal peptide; that stretch reads MELLPLWLCLGFHFLTVG. Residues 19–650 are Extracellular-facing; sequence WRNRSGTATA…CKWERLDLGL (632 aa). A glycan (N-linked (GlcNAc...) asparagine) is linked at asparagine 21. Residues 29–56 form the LRRNT domain; it reads ASQGVCKLVGGAADCRGQSLASVPSSLP. LRR repeat units lie at residues 58–79, 82–103, 106–127, 133–155, 158–179, 182–203, 206–227, 228–239, 251–272, and 273–294; these read HARM…SLQP, LLES…AFQE, HLRS…TAAA, GLRR…MLQN, SLRS…VFEG, RLRE…AFDG, ELRH…GLTR, LRVLNVSYNVLE, ELET…PQYS, and KLRT…YNTS. N-linked (GlcNAc...) asparagine glycosylation is present at asparagine 74. The N-linked (GlcNAc...) asparagine glycan is linked to asparagine 155. Residue asparagine 232 is glycosylated (N-linked (GlcNAc...) asparagine). 3 N-linked (GlcNAc...) asparagine glycosylation sites follow: asparagine 292, asparagine 309, and asparagine 312. 11 LRR repeats span residues 329–350, 353–374, 377–398, 403–424, 427–447, 463–484, 486–507, 512–534, 537–558, 559–580, and 585–594; these read DLRF…FLRK, SLSH…EHEP, ALTE…PGLA, SLRL…LFAN, NITT…PAAS, SLRS…PFQG, SLTY…APLQ, MLQV…DFSG, NLRD…GGSL, ALET…AVSE, and GLRTIYLSQN. N-linked (GlcNAc...) asparagine glycans are attached at residues asparagine 408 and asparagine 427. Asparagine 500 carries an N-linked (GlcNAc...) asparagine glycan. The 49-residue stretch at 595 to 643 folds into the LRRCT domain; that stretch reads PYDCCGVDGWGALQHGQTVADWAMVTCNLSSKIIRVTELPGGVPRDCKW. Asparagine 622 carries N-linked (GlcNAc...) asparagine glycosylation. A helical membrane pass occupies residues 651 to 671; it reads LYLVLILPSCLTLLVACTVIV. At 672–692 the chain is on the cytoplasmic side; it reads LTFKKPLLQVIKSRCHWSSVY.

This sequence belongs to the LRRC32/LRRC33 family. In terms of assembly, interacts with TGFB1; associates via disulfide bonds with the Latency-associated peptide chain (LAP) regulatory chain of TGFB1, leading to regulate activation of TGF-beta-1. Interacts (via LRR repeats) with TLR2, TLR3, TLR4, TLR9 and probably other Toll-like receptors. Interacts with CYBB/NOX2; the interaction is direct. In terms of tissue distribution, mainly expressed in cells of hematopoietic origin. Highly expressed in bone marrow, thymus, liver, lung, intestine and spleen. In the brain, highly expressed in microglia.

The protein resides in the cell membrane. It is found in the endoplasmic reticulum membrane. In terms of biological role, key regulator of transforming growth factor beta-1 (TGFB1) specifically required for microglia function in the nervous system. Required for activation of latent TGF-beta-1 in macrophages and microglia: associates specifically via disulfide bonds with the Latency-associated peptide (LAP), which is the regulatory chain of TGFB1, and regulates integrin-dependent activation of TGF-beta-1. TGF-beta-1 activation mediated by LRRC33/NRROS is highly localized: there is little spreading of TGF-beta-1 activated from one microglial cell to neighboring microglia, suggesting the existence of localized and selective activation of TGF-beta-1 by LRRC33/NRROS. Indirectly plays a role in Toll-like receptor (TLR) signaling: ability to inhibit TLR-mediated NF-kappa-B activation and cytokine production is probably a consequence of its role in TGF-beta-1 signaling. The sequence is that of Transforming growth factor beta activator LRRC33 from Homo sapiens (Human).